The primary structure comprises 44 residues: Thymosin beta-12 (44 aa).

Composition is skewed to basic and acidic residues over residues Met1 to Glu25 and Glu33 to Ser44. Residues Met1–Ser44 are disordered. Ser2 carries the N-acetylserine modification.

Belongs to the thymosin beta family.

The protein resides in the cytoplasm. It localises to the cytoskeleton. Plays an important role in the organization of the cytoskeleton. Binds to and sequesters actin monomers (G actin) and therefore inhibits actin polymerization. This is Thymosin beta-12 from Lateolabrax japonicus (Japanese sea perch).